Consider the following 166-residue polypeptide: Interferon gamma (166 aa).

The N-terminal stretch at 1-23 is a signal peptide; it reads MSYTTYFLAFQLCVTLCFSGSYC. A Pyrrolidone carboxylic acid modification is found at Gln24. 2 N-linked (GlcNAc...) asparagine glycosylation sites follow: Asn39 and Asn106.

It belongs to the type II (or gamma) interferon family. As to quaternary structure, homodimer. Interacts with IFNGR1 (via extracellular domain); this interaction promotes IFNGR1 dimerization. In terms of tissue distribution, released primarily from activated T lymphocytes.

It is found in the secreted. In terms of biological role, type II interferon produced by immune cells such as T-cells and NK cells that plays crucial roles in antimicrobial, antiviral, and antitumor responses by activating effector immune cells and enhancing antigen presentation. Primarily signals through the JAK-STAT pathway after interaction with its receptor IFNGR1 to affect gene regulation. Upon IFNG binding, IFNGR1 intracellular domain opens out to allow association of downstream signaling components JAK2, JAK1 and STAT1, leading to STAT1 activation, nuclear translocation and transcription of IFNG-regulated genes. Many of the induced genes are transcription factors such as IRF1 that are able to further drive regulation of a next wave of transcription. Plays a role in class I antigen presentation pathway by inducing a replacement of catalytic proteasome subunits with immunoproteasome subunits. In turn, increases the quantity, quality, and repertoire of peptides for class I MHC loading. Increases the efficiency of peptide generation also by inducing the expression of activator PA28 that associates with the proteasome and alters its proteolytic cleavage preference. Up-regulates as well MHC II complexes on the cell surface by promoting expression of several key molecules such as cathepsins B/CTSB, H/CTSH, and L/CTSL. Participates in the regulation of hematopoietic stem cells during development and under homeostatic conditions by affecting their development, quiescence, and differentiation. This Sus scrofa (Pig) protein is Interferon gamma (IFNG).